Here is a 369-residue protein sequence, read N- to C-terminus: Peptide chain release factor 2 (369 aa).

Glutamine 251 is subject to N5-methylglutamine.

The protein belongs to the prokaryotic/mitochondrial release factor family. Methylated by PrmC. Methylation increases the termination efficiency of RF2.

Its subcellular location is the cytoplasm. Peptide chain release factor 2 directs the termination of translation in response to the peptide chain termination codons UGA and UAA. The polypeptide is Peptide chain release factor 2 (prfB) (Thermotoga maritima (strain ATCC 43589 / DSM 3109 / JCM 10099 / NBRC 100826 / MSB8)).